The following is a 131-amino-acid chain: Large ribosomal subunit protein bL12 (131 aa).

This sequence belongs to the bacterial ribosomal protein bL12 family. In terms of assembly, homodimer. Part of the ribosomal stalk of the 50S ribosomal subunit. Forms a multimeric L10(L12)X complex, where L10 forms an elongated spine to which 2 to 4 L12 dimers bind in a sequential fashion. Binds GTP-bound translation factors.

Its function is as follows. Forms part of the ribosomal stalk which helps the ribosome interact with GTP-bound translation factors. Is thus essential for accurate translation. The chain is Large ribosomal subunit protein bL12 from Prochlorococcus marinus subsp. pastoris (strain CCMP1986 / NIES-2087 / MED4).